The primary structure comprises 872 residues: uncharacterized protein (872 aa).

A coiled-coil region spans residues Leu-496–Val-524. Disordered stretches follow at residues Arg-595–Gln-736 and Thr-844–Val-872. Polar residues-rich tracts occupy residues Gln-615–Phe-659 and Pro-670–Val-686. Residues Gln-687–Gln-736 show a composition bias toward low complexity.

The protein localises to the virion. This is an uncharacterized protein from Acanthamoeba polyphaga mimivirus (APMV).